The primary structure comprises 916 residues: Dual serine/threonine and tyrosine protein kinase (916 aa).

A compositionally biased stretch (basic and acidic residues) spans methionine 1–threonine 19. Residues methionine 1 to serine 27 form a disordered region. Positions proline 641–leucine 895 constitute a Protein kinase domain. Residues leucine 647–valine 655 and lysine 670 contribute to the ATP site. Aspartate 766 acts as the Proton acceptor in catalysis.

It belongs to the protein kinase superfamily. Ser/Thr protein kinase family.

The protein resides in the cytoplasm. Its subcellular location is the cell membrane. It localises to the apical cell membrane. The protein localises to the basolateral cell membrane. It is found in the cell junction. The catalysed reaction is L-seryl-[protein] + ATP = O-phospho-L-seryl-[protein] + ADP + H(+). The enzyme catalyses L-threonyl-[protein] + ATP = O-phospho-L-threonyl-[protein] + ADP + H(+). It catalyses the reaction L-tyrosyl-[protein] + ATP = O-phospho-L-tyrosyl-[protein] + ADP + H(+). Functionally, may act as a positive regulator of ERK phosphorylation downstream of fibroblast growth factor-receptor activation. May induce both caspase-dependent apoptosis and caspase-independent cell death. May play a role in the embryonic development. The chain is Dual serine/threonine and tyrosine protein kinase (dstyk) from Xenopus laevis (African clawed frog).